The chain runs to 443 residues: Probable serine transporter (443 aa).

Over 1 to 48 the chain is Cytoplasmic; that stretch reads MEIASNKGVIADASTPAGRAGMSESEWREAIKFDSTDTGWVIMSIGMA. A helical transmembrane segment spans residues 49-69; that stretch reads IGAGIVFLPVQVGLMGLWVFL. Residues 70–110 lie on the Periplasmic side of the membrane; sequence LSSVIGYPAMYLFQRLFINTLAESPECKDYPSVISGYLGKN. A helical transmembrane segment spans residues 111–131; sequence WGILLGALYFVMLVIWMFVYS. Residues 132–149 are Cytoplasmic-facing; that stretch reads TAITNDSASYLHTFGVTE. The chain crosses the membrane as a helical span at residues 150 to 170; sequence GLLSDSPFYGLVLICILVAIS. Residues 171–182 are Periplasmic-facing; sequence SRGEKLLFKIST. A helical membrane pass occupies residues 183-203; the sequence is GMVLTKLLVVAALGVSMVGMW. The Cytoplasmic portion of the chain corresponds to 204–214; the sequence is HLYNVGSLPPL. Residues 215–235 form a helical membrane-spanning segment; that stretch reads GLLVKNAIITLPFTLTSILFI. Residues 236 to 264 are Periplasmic-facing; it reads QTLSPMVISYRSREKSIEVARHKALRAMN. Residues 265–285 form a helical membrane-spanning segment; it reads IAFGILFVTVFFYAVSFTLAM. Residues 286-297 lie on the Cytoplasmic side of the membrane; it reads GHDEAVKAYEQN. A run of 2 helical transmembrane segments spans residues 298–318 and 319–339; these read ISALAIAAQFISGDGAAWVKV and VSVILNIFAVMTAFFGVYLGF. Over 340-367 the chain is Cytoplasmic; it reads REATQGIVMNILRRKMPAEKINENLVQR. Residues 368 to 388 traverse the membrane as a helical segment; it reads GIMIFAILLAWSAIVLNAPVL. Position 389 (Ser389) is a topological domain, periplasmic. A helical membrane pass occupies residues 390 to 410; sequence FTSICSPIFGMVGCLIPAWLV. Topologically, residues 411–421 are cytoplasmic; it reads YKVPALHKYKG. Residues 422 to 442 traverse the membrane as a helical segment; that stretch reads MSLYLIIVTGLLLCVSPFLAF. Residue Ser443 is a topological domain, periplasmic.

This sequence belongs to the amino acid/polyamine transporter 2 family. SdaC/TdcC subfamily.

Its subcellular location is the cell inner membrane. Its function is as follows. Plays a role in L-cysteine detoxification. May transport both D- and L-serine. The chain is Probable serine transporter (dlsT) from Escherichia coli (strain K12).